The primary structure comprises 320 residues: tRNA pseudouridine synthase B (320 aa).

Asp49 acts as the Nucleophile in catalysis.

Belongs to the pseudouridine synthase TruB family. Type 1 subfamily.

It carries out the reaction uridine(55) in tRNA = pseudouridine(55) in tRNA. Functionally, responsible for synthesis of pseudouridine from uracil-55 in the psi GC loop of transfer RNAs. The polypeptide is tRNA pseudouridine synthase B (Bartonella bacilliformis (strain ATCC 35685 / KC583 / Herrer 020/F12,63)).